The chain runs to 145 residues: 3-dehydroquinate dehydratase (145 aa).

Tyr-22 serves as the catalytic Proton acceptor. The substrate site is built by Asn-71, His-77, and Asp-84. His-97 serves as the catalytic Proton donor. Residues Leu-98–Ser-99 and Arg-108 each bind substrate.

The protein belongs to the type-II 3-dehydroquinase family. In terms of assembly, homododecamer.

The enzyme catalyses 3-dehydroquinate = 3-dehydroshikimate + H2O. The protein operates within metabolic intermediate biosynthesis; chorismate biosynthesis; chorismate from D-erythrose 4-phosphate and phosphoenolpyruvate: step 3/7. Its function is as follows. Catalyzes a trans-dehydration via an enolate intermediate. This chain is 3-dehydroquinate dehydratase, found in Francisella tularensis subsp. tularensis (strain WY96-3418).